Here is a 583-residue protein sequence, read N- to C-terminus: Ribonuclease ZC3H12A (583 aa).

The segment covering 1–11 (MSLWELEDRRS) has biased composition (basic and acidic residues). Disordered stretches follow at residues 1 to 29 (MSLW…EATT) and 73 to 119 (GSAA…GSDL). Residues 15 to 29 (TPRPAQEPTAEEATT) are compositionally biased toward low complexity. A ubiquitin association domain region spans residues 26 to 71 (EATTAELQMKVDFFRKLGYSSAEIHSVLQKLGIQADTNTVLGELVK). The interval 65-134 (VLGELVKHGS…DGSNVAMSHG (70 aa)) is necessary for interaction with TANK. The span at 73–82 (GSAAERERQA) shows a compositional bias: basic and acidic residues. Position 83 is a phosphoserine (Ser83). The segment at 96–281 (GGGTPKAPTV…LDNFLRKKPL (186 aa)) is RNase. In terms of domain architecture, RNase NYN spans 119–274 (LRPIVIDGSN…LGRHGPSLDN (156 aa)). The tract at residues 198-204 (RRVGGKR) is RNA binding. Asp210 provides a ligand contact to Mg(2+). Disordered stretches follow at residues 262–290 (DDPL…KQPC) and 323–404 (ANAL…PSEW). The C3H1-type zinc-finger motif lies at 284 to 309 (EHKKQPCPYGRKCTYGIKCRFLHPER). The interval 285–441 (HKKQPCPYGR…SELWGVRGGG (157 aa)) is necessary for interaction with ZC3H12D. Residues 341-352 (RPSPSSQPGSLP) show a composition bias toward low complexity. Residues 353–364 (TEHEQCSPDRKK) are compositionally biased toward basic and acidic residues. Positions 384-393 (PTGRSLPPSG) are enriched in low complexity. Ser422 and Ser426 each carry phosphoserine. Positions 503–530 (YQLPPPTQRLQEPQAPGPGADRGPWGGA) are disordered.

The protein belongs to the ZC3H12 family. As to quaternary structure, oligomer. Found in a deubiquitination complex with TANK, USP10 and ZC3H12A; this complex inhibits genotoxic stress- or interleukin-1-beta-mediated NF-kappaB activation by promoting IKBKG or TRAF6 deubiquitination. Interacts with IKBKG; this interaction increases in response to DNA damage. Interacts with TANK; this interaction increases in response to DNA damage and serves as a bridge to anchor both TANK and USP10 into a deubiquitinating complex. Interacts with TRAF6; this interaction increases in response to DNA damage and is stimulated by TANK. Interacts with USP10; this interaction increases in response to DNA damage and serves as a bridge to anchor both TANK and USP10 into a deubiquitinating complex. Interacts with ZC3H12D. Interacts with TNRC6A. Interacts with IKBKB/IKKB. Interacts with IKBKB/IKKB. Interacts with BTRC; the interaction occurs when ZC3H12A is phosphorylated in a IKBKB/IKKB-dependent manner. Interacts with IRAK1; this interaction increases the interaction between ZC3H12A and IKBKB/IKKB. Interacts with UPF1; this interaction occurs in a mRNA translationally active- and termination-dependent manner and is essential for ZC3H12A-mediated degradation of target mRNAs. Associates with ribosomes. Interacts with ubiquitin. Requires Mg(2+) as cofactor. Phosphorylated by IRAK1; phosphorylation is necessary for subsequent phosphorylation by the I-kappa-B-kinase (IKK) complex. Phosphorylated by I-kappa-B-kinase (IKK) subunits IKBKB/IKKB and CHUK/IKKA at Ser-422 and Ser-426; these phosphorylations promote ubiquitin proteasome-mediated degradation of ZC3H12A and hence facilitates rapid and robust production of IL-6 mRNA in response to toll-like receptor (TLR) or IL-1 receptor stimuli. In terms of processing, ubiquitinated; ubiquitination is induced in response to interleukin IL1 receptor stimuli in a IKBKB/IKKB and IRAK1-dependent manner, leading to proteasome-mediated degradation. Post-translationally, proteolytically cleaved between Arg-95 and Arg-198 by MALT1 in activated T-cells; cleavage at Arg-95 is critical for promoting ZC3H12A degradation in response to T-cell receptor (TCR) stimulation, and hence is necessary for prolonging the stability of a set of mRNAs controlling T-cell activation and Th17 cell differentiation.

The protein localises to the nucleus. It localises to the cytoplasm. The protein resides in the P-body. It is found in the rough endoplasmic reticulum membrane. Its subcellular location is the cytoplasmic granule. In terms of biological role, endoribonuclease involved in various biological functions such as cellular inflammatory response and immune homeostasis, glial differentiation of neuroprogenitor cells, cell death of cardiomyocytes, adipogenesis and angiogenesis. Functions as an endoribonuclease involved in mRNA decay. Modulates the inflammatory response by promoting the degradation of a set of translationally active cytokine-induced inflammation-related mRNAs, such as IL6 and IL12B, during the early phase of inflammation. Prevents aberrant T-cell-mediated immune reaction by degradation of multiple mRNAs controlling T-cell activation, such as those encoding cytokines (IL6 and IL2), cell surface receptors (ICOS, TNFRSF4 and TNFR2) and transcription factor (REL). Inhibits cooperatively with ZC3H12A the differentiation of helper T cells Th17 in lungs. They repress target mRNA encoding the Th17 cell-promoting factors IL6, ICOS, REL, IRF4, NFKBID and NFKBIZ. The cooperation requires RNA-binding by RC3H1 and the nuclease activity of ZC3H12A. Together with RC3H1, destabilizes TNFRSF4/OX40 mRNA by binding to the conserved stem loop structure in its 3'UTR. Self regulates by destabilizing its own mRNA. Cleaves mRNA harboring a stem-loop (SL), often located in their 3'-UTRs, during the early phase of inflammation in a helicase UPF1-dependent manner. Plays a role in the inhibition of microRNAs (miRNAs) biogenesis. Cleaves the terminal loop of a set of precursor miRNAs (pre-miRNAs) important for the regulation of the inflammatory response leading to their degradation, and thus preventing the biosynthesis of mature miRNAs. Also plays a role in promoting angiogenesis in response to inflammatory cytokines by inhibiting the production of antiangiogenic microRNAs via its anti-dicer RNase activity. Affects the overall ubiquitination of cellular proteins. Positively regulates deubiquitinase activity promoting the cleavage at 'Lys-48'- and 'Lys-63'-linked polyubiquitin chains on TNF receptor-associated factors (TRAFs), preventing JNK and NF-kappa-B signaling pathway activation, and hence negatively regulating macrophage-mediated inflammatory response and immune homeostasis. Also induces deubiquitination of the transcription factor HIF1A, probably leading to its stabilization and nuclear import, thereby positively regulating the expression of proangiogenic HIF1A-targeted genes. Involved in a TANK-dependent negative feedback response to attenuate NF-kappaB activation through the deubiquitination of IKBKG or TRAF6 in response to interleukin-1-beta (IL1B) stimulation or upon DNA damage. Prevents stress granules (SGs) formation and promotes macrophage apoptosis under stress conditions, including arsenite-induced oxidative stress, heat shock, and energy deprivation. Plays a role in the regulation of macrophage polarization; promotes IL4-induced polarization of macrophages M1 into anti-inflammatory M2 state. May also act as a transcription factor that regulates the expression of multiple genes involved in inflammatory response, angiogenesis, adipogenesis and apoptosis. Functions as a positive regulator of glial differentiation of neuroprogenitor cells through an amyloid precursor protein (APP)-dependent signaling pathway. Attenuates septic myocardial contractile dysfunction in response to lipopolysaccharide (LPS) by reducing I-kappa-B-kinase (IKK)-mediated NF-kappa-B activation, and hence myocardial pro-inflammatory cytokine production. In Bos taurus (Bovine), this protein is Ribonuclease ZC3H12A.